Consider the following 49-residue polypeptide: Large ribosomal subunit protein bL33 (49 aa).

Belongs to the bacterial ribosomal protein bL33 family.

This Thermosipho melanesiensis (strain DSM 12029 / CIP 104789 / BI429) protein is Large ribosomal subunit protein bL33.